We begin with the raw amino-acid sequence, 360 residues long: G-protein coupled receptor 183 (360 aa).

The Extracellular portion of the chain corresponds to 1–30 (MDIKMDNFTTPSAASLESDCDLYAHHHTAR). N-linked (GlcNAc...) asparagine glycosylation is present at Asn-7. Residues 31 to 56 (ILMPLHYSIVFIIGLVGNLLALIVII) traverse the membrane as a helical segment. At 57–76 (QNRKKINSTTLYSTNLVISD) the chain is on the cytoplasmic side. The helical transmembrane segment at 77–94 (ILFTTALPTRIAYYALGF) threads the bilayer. Arg-86 contacts 7alpha,25-dihydroxycholesterol. Residues 95-104 (DWRIGDALCR) are Extracellular-facing. An intrachain disulfide couples Cys-103 to Cys-180. Residues 105–126 (ITALVFYINTYAGVNFMTCLSI) form a helical membrane-spanning segment. Positions 111 and 115 each coordinate 7alpha,25-dihydroxycholesterol. Residues 125–133 (SIDRFFAVV) are interaction with G proteins. Residues 127–148 (DRFFAVVHPLRYNKIKRIEHAK) are Cytoplasmic-facing. Residues 149 to 167 (CICIFVWILVFGQTLPLLI) form a helical membrane-spanning segment. The Extracellular segment spans residues 168–191 (NPMSKQEAERTTCMEYPNFEETKS). A helical transmembrane segment spans residues 192-214 (LPWILLGACFIGYVLPLVIILIC). The Cytoplasmic portion of the chain corresponds to 215–240 (YSQICCKLFKTAKQNPLTEKSGVNKK). The helical transmembrane segment at 241–264 (ALNTIIFIIVVFVVCFTPYHVAII) threads the bilayer. Residue Tyr-259 participates in 7alpha,25-dihydroxycholesterol binding. Residues 265–286 (QHMIKKLRLPGLLECSQRHSFQ) lie on the Extracellular side of the membrane. Residues 287-311 (ISLHFTVCLMNFNCCMDPFIYFFAC) form a helical membrane-spanning segment. Residues 312-360 (KGYKRKVMKMLKRQVSVSISSAVRSAPEENSREMTETQMMIHSKSLNGK) lie on the Cytoplasmic side of the membrane. Phosphoserine is present on Ser-327. A disordered region spans residues 339-360 (EENSREMTETQMMIHSKSLNGK). Over residues 347-360 (ETQMMIHSKSLNGK) the composition is skewed to polar residues.

This sequence belongs to the G-protein coupled receptor 1 family. As to quaternary structure, homodimer and heterodimer. Heterodimerizes with CXCR5; leading to modulate the interaction between of CXCL13 and CXCR5.

It is found in the cell membrane. Its function is as follows. G-protein coupled receptor expressed in lymphocytes that acts as a chemotactic receptor for B-cells, T-cells, splenic dendritic cells, monocytes/macrophages and astrocytes. Receptor for oxysterol 7-alpha,25-dihydroxycholesterol (7-alpha,25-OHC) and other related oxysterols. Mediates cell positioning and movement of a number of cells by binding the 7-alpha,25-OHC ligand that forms a chemotactic gradient. Binding of 7-alpha,25-OHC mediates the correct localization of B-cells during humoral immune responses. Guides B-cell movement along the B-cell zone-T-cell zone boundary and later to interfollicular and outer follicular regions. Its specific expression during B-cell maturation helps position B-cells appropriately for mounting T-dependent antibody responses. Collaborates with CXCR5 to mediate B-cell migration; probably by forming a heterodimer with CXCR5 that affects the interaction between of CXCL13 and CXCR5. Also acts as a chemotactic receptor for some T-cells upon binding to 7-alpha,25-OHC ligand. Promotes follicular helper T (Tfh) cells differentiation by positioning activated T-cells at the follicle-T-zone interface, promoting contact of newly activated CD4 T-cells with activated dendritic cells and exposing them to Tfh-cell-promoting inducible costimulator (ICOS) ligand. Expression in splenic dendritic cells is required for their homeostasis, localization and ability to induce B- and T-cell responses: GPR183 acts as a chemotactic receptor in dendritic cells that mediates the accumulation of CD4(+) dendritic cells in bridging channels. Regulates migration of astrocytes and is involved in communication between astrocytes and macrophages. Promotes osteoclast precursor migration to bone surfaces. Signals constitutively through G(i)-alpha, but not G(s)-alpha or G(q)-alpha. Signals constitutively also via MAPK1/3 (ERK1/2). This Bos taurus (Bovine) protein is G-protein coupled receptor 183 (GPR183).